Here is a 338-residue protein sequence, read N- to C-terminus: MSTTASTPSSLRHLISIKDLSDEEFRILVQRAQHFKNVFKANKTNDFQSNHLKLLGRTIALIFTKRSTRTRISTEGAATFFGAQPMFLGKEDIQLGVNESFYDTTKVVSSMVSCIFARVNKHEDILAFCKDSSVPIINSLCDKFHPLQAICDLLTIIENFNISLDEVNKGINSKLKMAWIGDANNVINDMCIACLKFGISVSISTPPGIEMDSDIVDEAKKVAERNGATFELTHDSLKASTNANILVTDTFVSMGEEFAKQAKLKQFKGFQINQELVSVADPNYKFMHCLPRHQEEVSDDVFYGEHSIVFEEAENRLYAAMSAIDIFVNNKGNFKDLK.

Ser2 carries the post-translational modification N-acetylserine. Carbamoyl phosphate-binding positions include 67-70, Arg118, His145, and Gln148; that span reads STRT. 4 residues coordinate L-ornithine: Asn185, Asp249, Ser253, and Met254. Catalysis depends on Cys289, which acts as the Proton acceptor. Carbamoyl phosphate is bound by residues 289–290 and Arg316; that span reads CL.

It belongs to the aspartate/ornithine carbamoyltransferase superfamily. OTCase family. As to quaternary structure, interacts with CAR1.

The protein resides in the cytoplasm. It carries out the reaction carbamoyl phosphate + L-ornithine = L-citrulline + phosphate + H(+). The protein operates within amino-acid biosynthesis; L-arginine biosynthesis; L-arginine from L-ornithine and carbamoyl phosphate: step 1/3. Its activity is regulated as follows. Forms a stable complex with CAR1 in the presence of ornithine and arginine. In this complex CAR1 retains activity, but ARG3 activity is inhibited. This chain is Ornithine carbamoyltransferase (ARG3), found in Saccharomyces cerevisiae (strain ATCC 204508 / S288c) (Baker's yeast).